Here is a 213-residue protein sequence, read N- to C-terminus: MITIVLLILAYLLGSIPSGLWIGQVFFQINLREHGSGNTGTTNTFRILGKKAGMATFVIDFFKGTLATLLPIMFHLQGVSPLIFGLLAVIGHTFPIFAGFKGGKAVATSAGVVFGFAPVFCLYLAVVFFGTLYLGSMISLSSVTASIAAVIGVLLFPLFGFILNNYDPLFIAIILALASLIIIRHKDNIARIKNKTENLVPWGLNLTHQDPKK.

A run of 6 helical transmembrane segments spans residues 2 to 22, 54 to 74, 80 to 100, 110 to 130, 143 to 163, and 165 to 185; these read ITIV…GLWI, MATF…PIMF, SPLI…FAGF, AGVV…VFFG, VTAS…GFIL, and NYDP…IIRH.

Belongs to the PlsY family. As to quaternary structure, probably interacts with PlsX.

The protein resides in the cell membrane. It carries out the reaction an acyl phosphate + sn-glycerol 3-phosphate = a 1-acyl-sn-glycero-3-phosphate + phosphate. It functions in the pathway lipid metabolism; phospholipid metabolism. Functionally, catalyzes the transfer of an acyl group from acyl-phosphate (acyl-PO(4)) to glycerol-3-phosphate (G3P) to form lysophosphatidic acid (LPA). This enzyme utilizes acyl-phosphate as fatty acyl donor, but not acyl-CoA or acyl-ACP. This Streptococcus pneumoniae (strain Taiwan19F-14) protein is Glycerol-3-phosphate acyltransferase.